The sequence spans 520 residues: ADP,ATP carrier protein 4 (520 aa).

12 helical membrane passes run 43–63 (LSKFLFITLLMFCILFIQNLI), 80–100 (ISFLKFWGVMPCAFLMTAIYV), 111–131 (IFYLIISIFLAFFALFAYVIF), 166–186 (FSLFYIIAELWPNVAFALLFW), 201–221 (FYPLFGLLSQTGIYLAGQFLE), 240–260 (FHTLSVQIILTIVLILGIVGI), 305–325 (LIATLLICYGIAINLVEGPWK), 339–359 (AAFIGNYLSYTGAFTILFVVL), 370–390 (FTAAIITPIIVFTTGILFFAV), 399–419 (LIVASFILTDPALIAITIGAI), 462–482 (LGKSGSAFLQSLVFIILPSAS), and 485–505 (SISVCLMFIFIITCLIWFWAV).

The protein belongs to the ADP/ATP translocase tlc family.

It localises to the cell membrane. Its function is as follows. Provides the rickettsial cell with host ATP in exchange for rickettsial ADP. This is an obligate exchange system. This energy acquiring activity is an important component of rickettsial parasitism. This is ADP,ATP carrier protein 4 (tlcD) from Rickettsia bellii (strain RML369-C).